Consider the following 386-residue polypeptide: Adiponectin receptor protein 2 (386 aa).

Residues 1-71 (MNEPTENRLG…HEYSDEAPQE (71 aa)) form a disordered region. Topologically, residues 1-147 (MNEPTENRLG…SIFRIHTETG (147 aa)) are cytoplasmic. Positions 15–41 (PEPDIRLRKGHQLDGTRRGDNDSHQGD) are enriched in basic and acidic residues. Residues 148–168 (NIWTHLLGCVFFLCLGIFYMF) form a helical membrane-spanning segment. At 169–181 (RPNISFVAPLQEK) the chain is on the extracellular side. Residues 182–202 (VVFGLFFLGAILCLSFSWLFH) form a helical membrane-spanning segment. His202 contacts Zn(2+). Topologically, residues 203 to 213 (TVYCHSEGVSR) are cytoplasmic. Residues 214-234 (LFSKLDYSGIALLIMGSFVPW) traverse the membrane as a helical segment. The Extracellular portion of the chain corresponds to 235–245 (LYYSFYCNPQP). Residues 246-266 (CFIYLIVICVLGIAAIIVSQW) traverse the membrane as a helical segment. Topologically, residues 267–273 (DMFATPQ) are cytoplasmic. The chain crosses the membrane as a helical span at residues 274–294 (YRGVRAGVFLGLGLSGIIPTL). Residues 295–309 (HYVISEGFLKAATIG) lie on the Extracellular side of the membrane. A helical transmembrane segment spans residues 310-330 (QIGWLMLMASLYITGAALYAA). Over 331–348 (RIPERFFPGKCDIWFHSH) the chain is Cytoplasmic. Zn(2+) is bound by residues His348 and His352. Residues 349 to 369 (QLFHIFVVAGAFVHFHGVSNL) traverse the membrane as a helical segment. At 370–386 (QEFRFMIGGGCSEEDAL) the chain is on the extracellular side.

It belongs to the ADIPOR family. In terms of assembly, may form homooligomers and heterooligomers with ADIPOR1. Interacts with APPL2 (via BAR domain); ADIPOQ dissociates this interaction. Ubiquitous. Highly expressed in skeletal muscle, liver and placenta. Weakly expressed in brain, heart, colon, spleen, kidney, thymus, small intestine, peripheral blood leukocytes and lung.

The protein resides in the cell membrane. Functionally, receptor for ADIPOQ, an essential hormone secreted by adipocytes that regulates glucose and lipid metabolism. Required for normal body fat and glucose homeostasis. ADIPOQ-binding activates a signaling cascade that leads to increased PPARA activity, and ultimately to increased fatty acid oxidation and glucose uptake. Has intermediate affinity for globular and full-length adiponectin. Required for normal revascularization after chronic ischemia caused by severing of blood vessels. The sequence is that of Adiponectin receptor protein 2 from Homo sapiens (Human).